The primary structure comprises 445 residues: 2-oxoisovalerate dehydrogenase subunit alpha, mitochondrial (445 aa).

Residues 1–45 (MAVAIAAARVWRPNRGLSQAALLLLWRPGARGLARSHPHRQQQQF) constitute a mitochondrion transit peptide. Thiamine diphosphate contacts are provided by Y158 and R159. A K(+)-binding site is contributed by S206. Thiamine diphosphate is bound at residue S207. K(+) is bound by residues P208, T211, and Q212. E238 serves as a coordination point for Mg(2+). Residues G239, A240, and R265 each coordinate thiamine diphosphate. 2 residues coordinate Mg(2+): N267 and Y269. H336 is a thiamine diphosphate binding site. At S337 the chain carries Phosphoserine; by BCKDK. Phosphothreonine is present on T338. A phosphoserine mark is found at S339 and S347. K356 bears the N6-acetyllysine; alternate mark. An N6-succinyllysine; alternate modification is found at K356. K380 carries the N6-succinyllysine modification.

The protein belongs to the BCKDHA family. In terms of assembly, heterotetramer of 2 alpha/BCKDHA and 2 beta chains/BCKDHB that forms the branched-chain alpha-keto acid decarboxylase (E1) component of the BCKD complex. The branched-chain alpha-ketoacid dehydrogenase is a large complex composed of three major building blocks E1, E2 and E3. It is organized around E2, a 24-meric cubic core composed of DBT, to which are associated 6 to 12 copies of E1, and approximately 6 copies of the dehydrogenase E3, a DLD dimer. Interacts with PPM1K. It depends on thiamine diphosphate as a cofactor. Mg(2+) serves as cofactor. Phosphorylated at Ser-337 by BCKDK and dephosphorylated by protein phosphatase PPM1K.

Its subcellular location is the mitochondrion matrix. The enzyme catalyses N(6)-[(R)-lipoyl]-L-lysyl-[protein] + 3-methyl-2-oxobutanoate + H(+) = N(6)-[(R)-S(8)-2-methylpropanoyldihydrolipoyl]-L-lysyl-[protein] + CO2. In terms of biological role, together with BCKDHB forms the heterotetrameric E1 subunit of the mitochondrial branched-chain alpha-ketoacid dehydrogenase (BCKD) complex. The BCKD complex catalyzes the multi-step oxidative decarboxylation of alpha-ketoacids derived from the branched-chain amino-acids valine, leucine and isoleucine producing CO2 and acyl-CoA which is subsequently utilized to produce energy. The E1 subunit catalyzes the first step with the decarboxylation of the alpha-ketoacid forming an enzyme-product intermediate. A reductive acylation mediated by the lipoylamide cofactor of E2 extracts the acyl group from the E1 active site for the next step of the reaction. This Macaca fascicularis (Crab-eating macaque) protein is 2-oxoisovalerate dehydrogenase subunit alpha, mitochondrial (BCKDHA).